Consider the following 517-residue polypeptide: Crotonobetaine/carnitine--CoA ligase (517 aa).

The protein belongs to the ATP-dependent AMP-binding enzyme family.

The catalysed reaction is 4-(trimethylamino)butanoate + ATP + CoA = 4-(trimethylamino)butanoyl-CoA + AMP + diphosphate. It carries out the reaction crotonobetaine + ATP + CoA = crotonobetainyl-CoA + AMP + diphosphate. It catalyses the reaction (R)-carnitine + ATP + CoA = (R)-carnitinyl-CoA + AMP + diphosphate. It participates in amine and polyamine metabolism; carnitine metabolism. In terms of biological role, catalyzes the transfer of CoA to carnitine, generating the initial carnitinyl-CoA needed for the CaiB reaction cycle. Also has activity toward crotonobetaine and gamma-butyrobetaine. This is Crotonobetaine/carnitine--CoA ligase from Shigella flexneri.